A 555-amino-acid polypeptide reads, in one-letter code: Potassium-transporting ATPase potassium-binding subunit (555 aa).

10 helical membrane passes run 2-22 (IWVA…PTGI), 60-80 (QYAL…YFIF), 130-150 (IGIT…VMAF), 173-193 (VFLP…VPQT), 246-266 (MSNI…PFTY), 278-298 (ILFV…TTSE), 374-394 (AGFV…GLMV), 412-432 (LIAV…ALAL), 483-503 (LVMF…AASL), and 525-545 (GIFI…MLVL).

Belongs to the KdpA family. The system is composed of three essential subunits: KdpA, KdpB and KdpC.

It is found in the cell membrane. Functionally, part of the high-affinity ATP-driven potassium transport (or Kdp) system, which catalyzes the hydrolysis of ATP coupled with the electrogenic transport of potassium into the cytoplasm. This subunit binds the extracellular potassium ions and delivers the ions to the membrane domain of KdpB through an intramembrane tunnel. The chain is Potassium-transporting ATPase potassium-binding subunit from Bacillus anthracis (strain A0248).